A 262-amino-acid chain; its full sequence is 3-methyl-2-oxobutanoate hydroxymethyltransferase (262 aa).

D42 and D81 together coordinate Mg(2+). Residues 42-43 (DS), D81, and K110 contribute to the 3-methyl-2-oxobutanoate site. Residue E112 coordinates Mg(2+). The Proton acceptor role is filled by E180.

This sequence belongs to the PanB family. Homodecamer; pentamer of dimers. Requires Mg(2+) as cofactor.

Its subcellular location is the cytoplasm. The catalysed reaction is 3-methyl-2-oxobutanoate + (6R)-5,10-methylene-5,6,7,8-tetrahydrofolate + H2O = 2-dehydropantoate + (6S)-5,6,7,8-tetrahydrofolate. The protein operates within cofactor biosynthesis; (R)-pantothenate biosynthesis; (R)-pantoate from 3-methyl-2-oxobutanoate: step 1/2. Its function is as follows. Catalyzes the reversible reaction in which hydroxymethyl group from 5,10-methylenetetrahydrofolate is transferred onto alpha-ketoisovalerate to form ketopantoate. This Legionella pneumophila (strain Paris) protein is 3-methyl-2-oxobutanoate hydroxymethyltransferase.